The chain runs to 282 residues: 4-diphosphocytidyl-2-C-methyl-D-erythritol kinase (282 aa).

Residue lysine 9 is part of the active site. 98–108 (PMGGGLGGGSS) is an ATP binding site. The active site involves aspartate 140.

It belongs to the GHMP kinase family. IspE subfamily. In terms of assembly, homodimer.

The catalysed reaction is 4-CDP-2-C-methyl-D-erythritol + ATP = 4-CDP-2-C-methyl-D-erythritol 2-phosphate + ADP + H(+). The protein operates within isoprenoid biosynthesis; isopentenyl diphosphate biosynthesis via DXP pathway; isopentenyl diphosphate from 1-deoxy-D-xylulose 5-phosphate: step 3/6. Its function is as follows. Catalyzes the phosphorylation of the position 2 hydroxy group of 4-diphosphocytidyl-2C-methyl-D-erythritol. This Salmonella paratyphi B (strain ATCC BAA-1250 / SPB7) protein is 4-diphosphocytidyl-2-C-methyl-D-erythritol kinase.